The following is a 286-amino-acid chain: ATP synthase gamma chain (286 aa).

The protein belongs to the ATPase gamma chain family. F-type ATPases have 2 components, CF(1) - the catalytic core - and CF(0) - the membrane proton channel. CF(1) has five subunits: alpha(3), beta(3), gamma(1), delta(1), epsilon(1). CF(0) has three main subunits: a, b and c.

The protein resides in the cell inner membrane. Its function is as follows. Produces ATP from ADP in the presence of a proton gradient across the membrane. The gamma chain is believed to be important in regulating ATPase activity and the flow of protons through the CF(0) complex. The protein is ATP synthase gamma chain of Shewanella baltica (strain OS223).